A 798-amino-acid polypeptide reads, in one-letter code: Peroxisome proliferator-activated receptor gamma coactivator 1-alpha (798 aa).

K79 bears the N6-acetyllysine mark. Residues 100-140 form a disordered region; sequence PVDEDGLPSFDALTDGDVTTDNEASPSSMPDGTPPPQEAEE. Over residues 116–129 the composition is skewed to polar residues; sequence DVTTDNEASPSSMP. An LXXLL motif motif is present at residues 144–148; the sequence is LKKLL. K146 is modified (N6-acetyllysine). Phosphothreonine; by AMPK is present on T178. K184 is modified (N6-acetyllysine). The interval 213–277 is disordered; it reads YLTTNDDPPH…NDPKGSPFEN (65 aa). Basic and acidic residues predominate over residues 219-237; the sequence is DPPHTKPTENRNSSRDKCT. K254, K271, K278, and K321 each carry N6-acetyllysine. The disordered stretch occupies residues 290-351; that stretch reads GTAGLTPPTT…NNSTKKGPEQ (62 aa). The interaction with PPARG stretch occupies residues 293–339; sequence GLTPPTTPPHKANQDNPFRASPKLKSSCKTVVPPPSKKPRYSESSGT. The span at 334-346 shows a compositional bias: polar residues; it reads SESSGTQGNNSTK. N6-acetyllysine occurs at positions 347, 413, 442, and 451. Residues 350 to 798 are mediates interaction with RNF34; sequence EQSELYAQLS…LKEAQRSLRR (449 aa). Phosphoserine; by AMPK is present on S539. Disordered regions lie at residues 542–599, 613–639, and 650–669; these read SFNS…SSRS, HRNS…SYEE, and YRRE…ERQR. Positions 563-578 are enriched in basic residues; that stretch reads QRMRSRSRSFSRHRSC. A compositionally biased stretch (low complexity) spans 579-599; it reads SRSPYSRSRSRSPGSRSSSRS. Over residues 622–631 the composition is skewed to basic residues; the sequence is SRSRSPYSRR. The RRM domain maps to 677-753; it reads RVIYVGKIRP…TDFELYFCGR (77 aa). N6-acetyllysine occurs at positions 758 and 779.

As to quaternary structure, homooligomer. Interacts with MYBBP1A; inhibits MYBBP1A transcriptional activation. Interacts with PRDM16, LPIN1 and PML. Interacts (via LXXLL motif) with RORA and RORC (via AF-2 motif); activates RORA and RORC transcriptional activation. Interacts with LRPPRC. Interacts with FOXO1. Interacts with NR5A2. Phosphorylation by AMPK in skeletal muscle increases activation of its own promoter. Phosphorylated by CLK2. Post-translationally, heavily acetylated by KAT2A/GCN5 under conditions of high nutrients, leading to inactivation of PPARGC1A. Deacetylated by SIRT1 in low nutrients/high NAD conditions, leading to its activation. In terms of processing, ubiquitinated. Ubiquitination by RNF34 induces proteasomal degradation. As to expression, heart, skeletal muscle, liver and kidney. Expressed at lower levels in brain and pancreas and at very low levels in the intestine and white adipose tissue. In skeletal muscle, levels were lower in obese than in lean subjects and fasting induced a 2-fold increase in levels in the skeletal muscle in obese subjects.

The protein resides in the nucleus. It is found in the PML body. The protein localises to the cytoplasm. Transcriptional coactivator for steroid receptors and nuclear receptors. Greatly increases the transcriptional activity of PPARG and thyroid hormone receptor on the uncoupling protein promoter. Can regulate key mitochondrial genes that contribute to the program of adaptive thermogenesis. Plays an essential role in metabolic reprogramming in response to dietary availability through coordination of the expression of a wide array of genes involved in glucose and fatty acid metabolism. Acts as a key regulator of gluconeogenesis: stimulates hepatic gluconeogenesis by increasing the expression of gluconeogenic enzymes, and acting together with FOXO1 to promote the fasting gluconeogenic program. Induces the expression of PERM1 in the skeletal muscle in an ESRRA-dependent manner. Also involved in the integration of the circadian rhythms and energy metabolism. Required for oscillatory expression of clock genes, such as BMAL1 and NR1D1, through the coactivation of RORA and RORC, and metabolic genes, such as PDK4 and PEPCK. This chain is Peroxisome proliferator-activated receptor gamma coactivator 1-alpha (PPARGC1A), found in Homo sapiens (Human).